A 251-amino-acid polypeptide reads, in one-letter code: Probable transcriptional regulatory protein BLA_1344 (251 aa).

The protein belongs to the TACO1 family.

Its subcellular location is the cytoplasm. The protein is Probable transcriptional regulatory protein BLA_1344 of Bifidobacterium animalis subsp. lactis (strain AD011).